A 107-amino-acid polypeptide reads, in one-letter code: U1-lycotoxin-Ls1d (107 aa).

The N-terminal stretch at 1-20 (MMKVLVVVALLVTLISYSSS) is a signal peptide. The propeptide occupies 21-41 (EGIDDLEADELLSLMANEQTR). 4 disulfides stabilise this stretch: Cys-44-Cys-59, Cys-51-Cys-68, Cys-58-Cys-86, and Cys-70-Cys-84.

The protein belongs to the neurotoxin 19 (CSTX) family. 04 (U1-Lctx) subfamily. Expressed by the venom gland.

It localises to the secreted. This chain is U1-lycotoxin-Ls1d, found in Lycosa singoriensis (Wolf spider).